We begin with the raw amino-acid sequence, 156 residues long: Small ribosomal subunit protein uS7 (156 aa).

The protein belongs to the universal ribosomal protein uS7 family. Part of the 30S ribosomal subunit. Contacts proteins S9 and S11.

Functionally, one of the primary rRNA binding proteins, it binds directly to 16S rRNA where it nucleates assembly of the head domain of the 30S subunit. Is located at the subunit interface close to the decoding center, probably blocks exit of the E-site tRNA. This Psychromonas ingrahamii (strain DSM 17664 / CCUG 51855 / 37) protein is Small ribosomal subunit protein uS7.